Consider the following 104-residue polypeptide: Guanidinium exporter (104 aa).

M1 is a topological domain (cytoplasmic). The helical transmembrane segment at 2–19 threads the bilayer; sequence AWIILVIAGLLEVIWAIG. Residues 20 to 28 lie on the Periplasmic side of the membrane; sequence LKYSHGFSR. Residues 29–48 traverse the membrane as a helical segment; sequence LTPSIITLVAMAASVFLLAY. The Cytoplasmic segment spans residues 49–54; it reads AMKSLP. The helical transmembrane segment at 55–77 threads the bilayer; that stretch reads AGTAYAVWTGIGAVGTAILGIVL. The Periplasmic portion of the chain corresponds to 78–81; it reads LGES. A helical transmembrane segment spans residues 82-100; sequence ASLARILSLGLILAGIIGL. At 101-104 the chain is on the cytoplasmic side; sequence KLAS.

It belongs to the drug/metabolite transporter (DMT) superfamily. Small multidrug resistance (SMR) (TC 2.A.7.1) family. Gdx/SugE subfamily.

The protein resides in the cell inner membrane. In terms of biological role, guanidinium ion exporter. Couples guanidinium export to the proton motive force, exchanging one guanidinium ion for two protons. In Yersinia pestis, this protein is Guanidinium exporter.